Here is a 429-residue protein sequence, read N- to C-terminus: Enolase (429 aa).

Glutamine 162 is a binding site for (2R)-2-phosphoglycerate. Glutamate 204 acts as the Proton donor in catalysis. Aspartate 241, glutamate 283, and aspartate 310 together coordinate Mg(2+). (2R)-2-phosphoglycerate is bound by residues lysine 335, arginine 364, serine 365, and lysine 386. Lysine 335 serves as the catalytic Proton acceptor.

It belongs to the enolase family. The cofactor is Mg(2+).

The protein resides in the cytoplasm. The protein localises to the secreted. Its subcellular location is the cell surface. The catalysed reaction is (2R)-2-phosphoglycerate = phosphoenolpyruvate + H2O. It participates in carbohydrate degradation; glycolysis; pyruvate from D-glyceraldehyde 3-phosphate: step 4/5. Catalyzes the reversible conversion of 2-phosphoglycerate (2-PG) into phosphoenolpyruvate (PEP). It is essential for the degradation of carbohydrates via glycolysis. The protein is Enolase of Mycobacterium tuberculosis (strain ATCC 25177 / H37Ra).